Reading from the N-terminus, the 527-residue chain is Berberine bridge enzyme-like 10 (527 aa).

A signal peptide spans 1–20; the sequence is MEKLLVISLLLLISTSVTTS. C32 and C95 are oxidised to a cystine. N53 carries N-linked (GlcNAc...) asparagine glycosylation. Positions 73 to 248 constitute an FAD-binding PCMH-type domain; the sequence is TTPKPISVVA…LGYKIQLVPV (176 aa). H110 bears the Pros-8alpha-FAD histidine mark. Residues N137 and N293 are each glycosylated (N-linked (GlcNAc...) asparagine).

The protein belongs to the oxygen-dependent FAD-linked oxidoreductase family. It depends on FAD as a cofactor.

It is found in the secreted. It localises to the cell wall. In Arabidopsis thaliana (Mouse-ear cress), this protein is Berberine bridge enzyme-like 10.